A 62-amino-acid chain; its full sequence is Short neurotoxin 2 (62 aa).

A disordered region spans residues M1–G20. 4 disulfides stabilise this stretch: C3-C24, C17-C41, C43-C54, and C55-C60.

Belongs to the three-finger toxin family. Short-chain subfamily. Type I alpha-neurotoxin sub-subfamily. Expressed by the venom gland.

Its subcellular location is the secreted. In terms of biological role, binds to muscle nicotinic acetylcholine receptor (nAChR) and inhibit acetylcholine from binding to the receptor, thereby impairing neuromuscular transmission. This is Short neurotoxin 2 from Oxyuranus scutellatus scutellatus (Australian taipan).